Consider the following 656-residue polypeptide: Very long-chain specific acyl-CoA dehydrogenase, mitochondrial (656 aa).

Residues 1–33 form a disordered region; the sequence is MQSARMTPSVGRQLLRLGARSSRSTTVLQGQPR. The N-terminal 41 residues, 1–41, are a transit peptide targeting the mitochondrion; that stretch reads MQSARMTPSVGRQLLRLGARSSRSTTVLQGQPRPISAQRLY. A catalytic region spans residues 42–483; the sequence is AREATQAVLD…ALQGCMDKGK (442 aa). Lys-52 is modified (N6-acetyllysine). Lys-72 and Lys-128 each carry N6-acetyllysine; alternate. Lys-72 and Lys-128 each carry N6-succinyllysine; alternate. Lys-196 carries the N6-succinyllysine modification. 215–224 is an FAD binding site; the sequence is FCLTEPSSGS. An S-nitrosocysteine modification is found at Cys-238. The residue at position 240 (Lys-240) is an N6-acetyllysine; alternate. Lys-240 is modified (N6-succinyllysine; alternate). 250–252 contributes to the FAD binding site; sequence WIS. Position 269 is an N6-succinyllysine (Lys-269). Residues Lys-277 and Lys-279 each carry the N6-acetyllysine; alternate modification. Residues Lys-277 and Lys-279 each carry the N6-succinyllysine; alternate modification. Lys-299 and Lys-317 each carry N6-acetyllysine. The residue at position 332 (Lys-332) is an N6-acetyllysine; alternate. The residue at position 332 (Lys-332) is an N6-succinyllysine; alternate. At Lys-373 the chain carries N6-succinyllysine. 462–464 contributes to the substrate binding site; it reads FEG. Catalysis depends on Glu-463, which acts as the Proton acceptor. 465 to 467 provides a ligand contact to FAD; the sequence is AND. Lys-483 is modified (N6-acetyllysine; alternate). Lys-483 carries the N6-succinyllysine; alternate modification. Positions 484–517 are membrane-anchoring; it reads ELTGLGNALKNPFGNVGLLMGEAGKQLRRRTGIG. 2 positions are modified to phosphoserine: Ser-518 and Ser-523. Lys-551 is subject to N6-acetyllysine. Lys-557 carries the N6-acetyllysine; alternate modification. Lys-557 carries the post-translational modification N6-succinyllysine; alternate. Gln-563 lines the FAD pocket. Lys-640 is subject to N6-succinyllysine.

It belongs to the acyl-CoA dehydrogenase family. Homodimer. Homodimerizes after import into the mitochondrion. Requires FAD as cofactor. S-nitrosylation at Cys-238 in liver improves catalytic efficiency.

It localises to the mitochondrion inner membrane. It carries out the reaction a very-long-chain 2,3-saturated fatty acyl-CoA + oxidized [electron-transfer flavoprotein] + H(+) = a very-long-chain (2E)-enoyl-CoA + reduced [electron-transfer flavoprotein]. It catalyses the reaction dodecanoyl-CoA + oxidized [electron-transfer flavoprotein] + H(+) = (2E)-dodecenoyl-CoA + reduced [electron-transfer flavoprotein]. The enzyme catalyses tetradecanoyl-CoA + oxidized [electron-transfer flavoprotein] + H(+) = (2E)-tetradecenoyl-CoA + reduced [electron-transfer flavoprotein]. The catalysed reaction is oxidized [electron-transfer flavoprotein] + hexadecanoyl-CoA + H(+) = (2E)-hexadecenoyl-CoA + reduced [electron-transfer flavoprotein]. It carries out the reaction octadecanoyl-CoA + oxidized [electron-transfer flavoprotein] + H(+) = (2E)-octadecenoyl-CoA + reduced [electron-transfer flavoprotein]. It catalyses the reaction eicosanoyl-CoA + oxidized [electron-transfer flavoprotein] + H(+) = (2E)-eicosenoyl-CoA + reduced [electron-transfer flavoprotein]. The enzyme catalyses docosanoyl-CoA + oxidized [electron-transfer flavoprotein] + H(+) = (2E)-docosenoyl-CoA + reduced [electron-transfer flavoprotein]. The catalysed reaction is tetracosanoyl-CoA + oxidized [electron-transfer flavoprotein] + H(+) = (2E)-tetracosenoyl-CoA + reduced [electron-transfer flavoprotein]. The protein operates within lipid metabolism; mitochondrial fatty acid beta-oxidation. Very long-chain specific acyl-CoA dehydrogenase is one of the acyl-CoA dehydrogenases that catalyze the first step of mitochondrial fatty acid beta-oxidation, an aerobic process breaking down fatty acids into acetyl-CoA and allowing the production of energy from fats. The first step of fatty acid beta-oxidation consists in the removal of one hydrogen from C-2 and C-3 of the straight-chain fatty acyl-CoA thioester, resulting in the formation of trans-2-enoyl-CoA. Among the different mitochondrial acyl-CoA dehydrogenases, very long-chain specific acyl-CoA dehydrogenase acts specifically on acyl-CoAs with saturated 12 to 24 carbons long primary chains. This chain is Very long-chain specific acyl-CoA dehydrogenase, mitochondrial, found in Mus musculus (Mouse).